Reading from the N-terminus, the 63-residue chain is ATP synthase F(0) complex subunit 8 (63 aa).

A helical transmembrane segment spans residues 8–24; the sequence is MWLLTILSMLLTLFVLF. Lys57 is modified (N6-acetyllysine).

Belongs to the ATPase protein 8 family. Component of the ATP synthase complex composed at least of ATP5F1A/subunit alpha, ATP5F1B/subunit beta, ATP5MC1/subunit c (homooctomer), MT-ATP6/subunit a, MT-ATP8/subunit 8, ATP5ME/subunit e, ATP5MF/subunit f, ATP5MG/subunit g, ATP5MK/subunit k, ATP5MJ/subunit j, ATP5F1C/subunit gamma, ATP5F1D/subunit delta, ATP5F1E/subunit epsilon, ATP5PF/subunit F6, ATP5PB/subunit b, ATP5PD/subunit d, ATP5PO/subunit OSCP. ATP synthase complex consists of a soluble F(1) head domain (subunits alpha(3) and beta(3)) - the catalytic core - and a membrane F(0) domain - the membrane proton channel (subunits c, a, 8, e, f, g, k and j). These two domains are linked by a central stalk (subunits gamma, delta, and epsilon) rotating inside the F1 region and a stationary peripheral stalk (subunits F6, b, d, and OSCP). Interacts with PRICKLE3.

The protein localises to the mitochondrion membrane. In terms of biological role, subunit 8, of the mitochondrial membrane ATP synthase complex (F(1)F(0) ATP synthase or Complex V) that produces ATP from ADP in the presence of a proton gradient across the membrane which is generated by electron transport complexes of the respiratory chain. ATP synthase complex consist of a soluble F(1) head domain - the catalytic core - and a membrane F(1) domain - the membrane proton channel. These two domains are linked by a central stalk rotating inside the F(1) region and a stationary peripheral stalk. During catalysis, ATP synthesis in the catalytic domain of F(1) is coupled via a rotary mechanism of the central stalk subunits to proton translocation. In vivo, can only synthesize ATP although its ATP hydrolase activity can be activated artificially in vitro. Part of the complex F(0) domain. The sequence is that of ATP synthase F(0) complex subunit 8 from Balaenoptera physalus (Fin whale).